We begin with the raw amino-acid sequence, 393 residues long: Dual specificity mitogen-activated protein kinase kinase 1 (393 aa).

The segment at Met1–Glu27 is disordered. Residues Phe68–Ile361 form the Protein kinase domain. ATP-binding positions include Leu74–Val82, Lys97, Met143–Met146, and Ser150–Gln153. U0126 is bound at residue Lys97. Glu144–Met146 contributes to the K-252a binding site. The active-site Proton acceptor is Asp190. Residues Lys192–Asn195 and Asp208 contribute to the ATP site. Ser194 lines the K-252a pocket. Residue Asp208 to Val211 participates in U0126 binding. Residues Ser218 and Ser222 each carry the phosphoserine; by BRAF and RAF1 modification. Residues Glu270–Pro307 form an RAF1-binding region. Thr286 carries the post-translational modification Phosphothreonine. Thr292 carries the phosphothreonine; by MAPK1 modification. A Phosphoserine; by PAK modification is found at Ser298.

The protein belongs to the protein kinase superfamily. STE Ser/Thr protein kinase family. MAP kinase kinase subfamily. Found in a complex with at least BRAF, HRAS, MAP2K1, MAPK3/ERK1 and RGS14. Forms a heterodimer with MAP2K2/MEK2. Forms heterodimers with KSR2 which further dimerize to form tetramers. Interacts with KSR1 or KSR2 and BRAF; the interaction with KSR1 or KSR2 mediates KSR1-BRAF or KSR2-BRAF dimerization. Interacts with ARBB2, LAMTOR3 and RAF1. Interacts with MAPK1/ERK2. Interacts with MORG1. Interacts with PPARG. Interacts with isoform 1 of VRK2. Interacts with SGK1. Interacts with BIRC6/bruce. Interacts with KAT7; the interaction promotes KAT7 phosphorylation. Interacts with RAF1 and NEK10; the interaction is required for ERK1/2-signaling pathway activation in response to UV irradiation. Interacts with TRAF3IP3. Interacts with MOS. As to quaternary structure, (Microbial infection) Interacts with Yersinia YopJ. Post-translationally, phosphorylation at Ser-218 and Ser-222 by MAP kinase kinase kinases (BRAF or MEKK1) positively regulates kinase activity. Also phosphorylated at Thr-292 by MAPK1/ERK2 and at Ser-298 by PAK. MAPK1/ERK2 phosphorylation of Thr-292 occurs in response to cellular adhesion and leads to inhibition of Ser-298 phosphorylation by PAK. Autophosphorylated at Ser-218 and Ser-222, autophosphosphorylation is promoted by NEK10 following UV irradiation. (Microbial infection) Acetylation by Yersinia YopJ prevents phosphorylation and activation, thus blocking the MAPK signaling pathway. In terms of tissue distribution, widely expressed, with extremely low levels in brain.

The protein resides in the cytoplasm. It is found in the cytoskeleton. The protein localises to the microtubule organizing center. Its subcellular location is the centrosome. It localises to the spindle pole body. The protein resides in the nucleus. It is found in the membrane. It carries out the reaction L-seryl-[protein] + ATP = O-phospho-L-seryl-[protein] + ADP + H(+). It catalyses the reaction L-threonyl-[protein] + ATP = O-phospho-L-threonyl-[protein] + ADP + H(+). The catalysed reaction is L-tyrosyl-[protein] + ATP = O-phospho-L-tyrosyl-[protein] + ADP + H(+). Ras proteins such as HRAS mediate the activation of RAF proteins such as RAF1 or BRAF which in turn activate extracellular signal-regulated kinases (ERK) through MAPK (mitogen-activated protein kinases) and ERK kinases MAP2K1/MEK1 and MAP2K2/MEK2. Activation occurs through phosphorylation of Ser-218 and Ser-222. MAP2K1/MEK1 binds KSR1 or KSR2 releasing the inhibitory intramolecular interaction between KSR1 or KSR2 protein kinase and N-terminal domains. This allows KSR1 or KSR2 dimerization with BRAF leading to BRAF activation and phosphorylation of MAP2K1. MAP2K1/MEK1 is also the target of negative feed-back regulation by its substrate kinases, such as MAPK1/ERK2. These phosphorylate MAP2K1/MEK1 on Thr-292, thereby facilitating dephosphorylation of the activating residues Ser-218 and Ser-222. Inhibited by serine/threonine phosphatase 2A. Many inhibitors have been identified including pyrrole derivatives, TAK-733 (one of a series of 8-methylpyrido[2,3-d]pyrimidine-4,7(3H,8H)-dione derivatives), CH4987655 and RDEA119/BAY 869766. Its function is as follows. Dual specificity protein kinase which acts as an essential component of the MAP kinase signal transduction pathway. Binding of extracellular ligands such as growth factors, cytokines and hormones to their cell-surface receptors activates RAS and this initiates RAF1 activation. RAF1 then further activates the dual-specificity protein kinases MAP2K1/MEK1 and MAP2K2/MEK2. Both MAP2K1/MEK1 and MAP2K2/MEK2 function specifically in the MAPK/ERK cascade, and catalyze the concomitant phosphorylation of a threonine and a tyrosine residue in a Thr-Glu-Tyr sequence located in the extracellular signal-regulated kinases MAPK3/ERK1 and MAPK1/ERK2, leading to their activation and further transduction of the signal within the MAPK/ERK cascade. Activates BRAF in a KSR1 or KSR2-dependent manner; by binding to KSR1 or KSR2 releases the inhibitory intramolecular interaction between KSR1 or KSR2 protein kinase and N-terminal domains which promotes KSR1 or KSR2-BRAF dimerization and BRAF activation. Depending on the cellular context, this pathway mediates diverse biological functions such as cell growth, adhesion, survival and differentiation, predominantly through the regulation of transcription, metabolism and cytoskeletal rearrangements. One target of the MAPK/ERK cascade is peroxisome proliferator-activated receptor gamma (PPARG), a nuclear receptor that promotes differentiation and apoptosis. MAP2K1/MEK1 has been shown to export PPARG from the nucleus. The MAPK/ERK cascade is also involved in the regulation of endosomal dynamics, including lysosome processing and endosome cycling through the perinuclear recycling compartment (PNRC), as well as in the fragmentation of the Golgi apparatus during mitosis. The protein is Dual specificity mitogen-activated protein kinase kinase 1 of Homo sapiens (Human).